Consider the following 88-residue polypeptide: Small ribosomal subunit protein bS20 (88 aa).

The span at 1-21 shows a compositional bias: basic residues; it reads MANSKSAKKRALQSEKRRQHN. The interval 1–27 is disordered; sequence MANSKSAKKRALQSEKRRQHNASRSSM.

This sequence belongs to the bacterial ribosomal protein bS20 family.

Binds directly to 16S ribosomal RNA. The protein is Small ribosomal subunit protein bS20 of Shewanella piezotolerans (strain WP3 / JCM 13877).